The following is a 168-amino-acid chain: Cell division inhibitor SulA (168 aa).

Residues 105–111 (ALQTGNY) form a ftsZ binding region.

It belongs to the SulA family. As to quaternary structure, interacts with FtsZ. Is rapidly cleaved and degraded by the Lon protease once DNA damage is repaired.

Functionally, component of the SOS system and an inhibitor of cell division. Accumulation of SulA causes rapid cessation of cell division and the appearance of long, non-septate filaments. In the presence of GTP, binds a polymerization-competent form of FtsZ in a 1:1 ratio, thus inhibiting FtsZ polymerization and therefore preventing it from participating in the assembly of the Z ring. This mechanism prevents the premature segregation of damaged DNA to daughter cells during cell division. The polypeptide is Cell division inhibitor SulA (Erwinia pyrifoliae (strain DSM 12163 / CIP 106111 / Ep16/96)).